We begin with the raw amino-acid sequence, 660 residues long: Threonine--tRNA ligase (660 aa).

One can recognise a TGS domain in the interval Met1–Ser49. The segment at Asp225–Pro554 is catalytic. Residues Cys318, His369, and His531 each coordinate Zn(2+).

It belongs to the class-II aminoacyl-tRNA synthetase family. As to quaternary structure, homodimer. It depends on Zn(2+) as a cofactor.

The protein resides in the cytoplasm. It carries out the reaction tRNA(Thr) + L-threonine + ATP = L-threonyl-tRNA(Thr) + AMP + diphosphate + H(+). Functionally, catalyzes the attachment of threonine to tRNA(Thr) in a two-step reaction: L-threonine is first activated by ATP to form Thr-AMP and then transferred to the acceptor end of tRNA(Thr). This Thermoplasma acidophilum (strain ATCC 25905 / DSM 1728 / JCM 9062 / NBRC 15155 / AMRC-C165) protein is Threonine--tRNA ligase.